The following is a 145-amino-acid chain: Bacilliredoxin Acid345_1880 (145 aa).

Belongs to the bacilliredoxin family.

In Koribacter versatilis (strain Ellin345), this protein is Bacilliredoxin Acid345_1880.